The sequence spans 247 residues: Calpain small subunit 2 (247 aa).

Residues Ala-88, Asp-91, Glu-93, Asp-131, Asp-133, Thr-135, Lys-137, Glu-142, Asp-161, Asp-163, Ser-165, and Asp-204 each coordinate Ca(2+). EF-hand domains are found at residues 118 to 151 (FSLD…NNIK), 148 to 183 (NNIK…AGFQ), 184 to 212 (LNEQ…ISCL), and 213 to 247 (VRLD…TMYS).

Heterodimer of a large (catalytic) and a small (regulatory) subunit.

It localises to the cytoplasm. The protein resides in the cell membrane. Calcium-regulated non-lysosomal thiol-protease which catalyzes limited proteolysis of substrates involved in cytoskeletal remodeling and signal transduction. This small subunit may act as a tissue-specific chaperone of the large subunit, possibly by helping it fold into its correct conformation for activity. In Mus musculus (Mouse), this protein is Calpain small subunit 2 (Capns2).